The primary structure comprises 142 residues: ATP synthase epsilon chain (142 aa).

This sequence belongs to the ATPase epsilon chain family. In terms of assembly, F-type ATPases have 2 components, CF(1) - the catalytic core - and CF(0) - the membrane proton channel. CF(1) has five subunits: alpha(3), beta(3), gamma(1), delta(1), epsilon(1). CF(0) has three main subunits: a, b and c.

It is found in the cell inner membrane. Produces ATP from ADP in the presence of a proton gradient across the membrane. The protein is ATP synthase epsilon chain of Koribacter versatilis (strain Ellin345).